We begin with the raw amino-acid sequence, 428 residues long: MLYKRSSQLFLEAEKVIPGGVNSPVRAFKSVGGTPIFAKSAKGAYVYDEDGNRFVDYINSWGPMILGHAYEPVVTAVIEKAKSGTSFGMPTELETEIAKLAVSMVSNIDKIRFVNSGTEACMSAIRLARGFTKRDKIIKFAGCYHGHSDSFLIQAGSGAITFGSPNSPGVTSGTAKDTLLASYNDIQNVKNLFDANKNEIAAVIIEPVAGNMGCIPPQKGFLEALQQLCHENNALLIFDEVMTGFRLAKGGAQELFNVQADIVCFGKVIGGGLPVGAFAARNEIMNYLAPLGPVYQAGTLSGNPLAMAAGLAMLKALNENQEVFARLEEKTAYLAKGIADVLTSNNVVHTINRVGSMVSVHFDANPVFDFETAKNGDNDTFKKFFHGLLAEGVYIAPSAYETWFISDALTYEDLDFTIRAVDKVSKNL.

Lysine 267 is modified (N6-(pyridoxal phosphate)lysine).

This sequence belongs to the class-III pyridoxal-phosphate-dependent aminotransferase family. HemL subfamily. In terms of assembly, homodimer. The cofactor is pyridoxal 5'-phosphate.

The protein resides in the cytoplasm. The enzyme catalyses (S)-4-amino-5-oxopentanoate = 5-aminolevulinate. The protein operates within porphyrin-containing compound metabolism; protoporphyrin-IX biosynthesis; 5-aminolevulinate from L-glutamyl-tRNA(Glu): step 2/2. The chain is Glutamate-1-semialdehyde 2,1-aminomutase from Flavobacterium psychrophilum (strain ATCC 49511 / DSM 21280 / CIP 103535 / JIP02/86).